Consider the following 103-residue polypeptide: Co-chaperonin GroES (103 aa).

The protein belongs to the GroES chaperonin family. In terms of assembly, heptamer of 7 subunits arranged in a ring. Interacts with the chaperonin GroEL.

Its subcellular location is the cytoplasm. Together with the chaperonin GroEL, plays an essential role in assisting protein folding. The GroEL-GroES system forms a nano-cage that allows encapsulation of the non-native substrate proteins and provides a physical environment optimized to promote and accelerate protein folding. GroES binds to the apical surface of the GroEL ring, thereby capping the opening of the GroEL channel. In Synechocystis sp. (strain ATCC 27184 / PCC 6803 / Kazusa), this protein is Co-chaperonin GroES.